The following is a 263-amino-acid chain: Probable ABC transporter permease protein ycf63 (263 aa).

Helical transmembrane passes span 43 to 63 (LVGPGSLNITLLTACFISMVF), 82 to 102 (AVIVIAFTRELSPVLTAVIIA), 136 to 156 (LVFPKVAACCIMLPILSTISL), 159 to 179 (SIAISIFVSFVMYGIPSSIFL), 199 to 219 (LCFGTIIAFISCQWGLTSSGG), and 230 to 250 (SVVTILLTIFITDFILSYFMF).

The protein belongs to the MlaE permease family.

The protein localises to the plastid. Its subcellular location is the chloroplast membrane. Its function is as follows. Could be part of an ABC transporter complex. This chain is Probable ABC transporter permease protein ycf63 (ycf63), found in Porphyra purpurea (Red seaweed).